Here is a 509-residue protein sequence, read N- to C-terminus: GMP synthase [glutamine-hydrolyzing] (509 aa).

In terms of domain architecture, Glutamine amidotransferase type-1 spans 4-193; the sequence is KILILDFGSQ…VVHICGCSQD (190 aa). Residue Cys-79 is the Nucleophile of the active site. Catalysis depends on residues His-167 and Glu-169. Residues 194-384 enclose the GMPS ATP-PPase domain; it reads WTPDAFVETT…LGIDDIILKR (191 aa). 221–227 is a binding site for ATP; the sequence is SGGVDSS.

As to quaternary structure, homodimer.

It carries out the reaction XMP + L-glutamine + ATP + H2O = GMP + L-glutamate + AMP + diphosphate + 2 H(+). It participates in purine metabolism; GMP biosynthesis; GMP from XMP (L-Gln route): step 1/1. Catalyzes the synthesis of GMP from XMP. In Cytophaga hutchinsonii (strain ATCC 33406 / DSM 1761 / CIP 103989 / NBRC 15051 / NCIMB 9469 / D465), this protein is GMP synthase [glutamine-hydrolyzing].